The sequence spans 317 residues: L-lactate dehydrogenase (317 aa).

Residues Val16, Asp37, Arg42, Tyr67, and 81 to 82 (GA) each bind NAD(+). Gln84 and Arg90 together coordinate substrate. Residues Ser103, 120–122 (AAN), and Ser145 each bind NAD(+). 122–125 (NPVD) contributes to the substrate binding site. 150 to 153 (DSAR) is a substrate binding site. His177 (proton acceptor) is an active-site residue. Tyr221 carries the post-translational modification Phosphotyrosine. Residue Thr230 coordinates substrate.

It belongs to the LDH/MDH superfamily. LDH family. Homotetramer.

It localises to the cytoplasm. The catalysed reaction is (S)-lactate + NAD(+) = pyruvate + NADH + H(+). The protein operates within fermentation; pyruvate fermentation to lactate; (S)-lactate from pyruvate: step 1/1. In terms of biological role, catalyzes the conversion of lactate to pyruvate. The protein is L-lactate dehydrogenase of Limosilactobacillus fermentum (strain NBRC 3956 / LMG 18251) (Lactobacillus fermentum).